The sequence spans 544 residues: Putative cysteine ligase BshC (544 aa).

A coiled-coil region spans residues 431–463 (LNDTCRTIKEEHEKFIQELSRLDEKIYDFEEKN).

This sequence belongs to the BshC family.

Functionally, involved in bacillithiol (BSH) biosynthesis. May catalyze the last step of the pathway, the addition of cysteine to glucosamine malate (GlcN-Mal) to generate BSH. The polypeptide is Putative cysteine ligase BshC (Natranaerobius thermophilus (strain ATCC BAA-1301 / DSM 18059 / JW/NM-WN-LF)).